The chain runs to 476 residues: Oogenesin-2 (476 aa).

The stretch at 97-121 (RCKLREITLSHDLVVVWAGSHEVEG) is one LRR 1; degenerate repeat. An LRR 2; degenerate repeat occupies 176 to 200 (HLHCRKLKIYGLTKAAVIEMFKIVH). The stretch at 201–226 (AEYIEDLELSCLCLEYLDFLNPYLKQ) is one LRR 3; degenerate repeat. The LRR 4; degenerate repeat unit spans residues 227–264 (MSNLLSLTLDEIIYTLNIDDYRNLNEEKVITVISHLPT). 4 LRR repeats span residues 265-285 (FHHLQELYVHGVIFIECLRCL), 286-317 (KKPLEVLSFTDCDLSQSDLDYLPYCLNIFELR), 342-369 (RHTLKSLQLMSCEMGETHFNALLPALSQ), and 370-394 (CYQLTVVNFYGNELSLLFLKKLLHH).

It belongs to the PRAME family. In terms of tissue distribution, expressed in ovary, specifically in oocytes. Detected in follicles with two layers of granulosa cells, and are present in early as well as large antral follicles.

The protein is Oogenesin-2 of Mus musculus (Mouse).